We begin with the raw amino-acid sequence, 165 residues long: Ubiquitin-like protein ISG15 (165 aa).

Ubiquitin-like domains lie at 2-78 (GWDL…VDKC) and 79-157 (DEPL…LRGG). Residue cysteine 78 is modified to S-nitrosocysteine; alternate. The LRLRGG motif lies at 152–157 (LRLRGG). The tract at residues 153–157 (RLRGG) is involved in the ligation of specific target proteins. Glycine 157 is covalently cross-linked (Glycyl lysine isopeptide (Gly-Lys) (interchain with K-? in acceptor proteins)). The propeptide at 158–165 (GTEPGGRS) is removed in mature form.

Homodimer; disulfide-linked. Interacts with, and is conjugated to its targets by UBE1L (E1 enzyme) and UBE2E2 (E2 enzyme). Interacts with NEDD4. Interacts with PARP12; this interaction inhibits PINK1/Parkin-dependent mitophagy. As to quaternary structure, (Microbial infection) Interacts with vaccinia virus protein E3. In terms of assembly, (Microbial infection) Interaction with influenza B NS1 protein inhibits its conjugation. (Microbial infection) Interacts (via C-terminus) with Crimean-Congo hemorrhagic fever virus (CCHFV) RNA-directed RNA polymerase L (via N-terminus); the deISGylase activity of the viral protein interferes with antiviral signaling pathways mediated by NF-kappaB and IRF signalings. As to quaternary structure, (Microbial infection) Interacts with human cytomegalovirus protein UL26; this interaction inhibits global protein ISGylation. Post-translationally, S-nitrosylation decreases its dimerization, thereby increasing the availability as well as the solubility of monomeric ISG15 for its conjugation to cellular proteins. Induced as an inactive, precursor protein that is cleaved by specific proteases to expose the C-terminal diglycine (LRLRGG) motif. This motif is essential not only for its conjugation to substrates but also for its recognition by the relevant processing proteases. Detected in lymphoid cells, striated and smooth muscle, several epithelia and neurons. Expressed in neutrophils, monocytes and lymphocytes. Enhanced expression seen in pancreatic adenocarcinoma, endometrial cancer, and bladder cancer, as compared to non-cancerous tissue. In bladder cancer, the increase in expression exhibits a striking positive correlation with more advanced stages of the disease.

The protein localises to the cytoplasm. Its subcellular location is the secreted. Ubiquitin-like protein which plays a key role in the innate immune response to viral infection either via its conjugation to a target protein (ISGylation) or via its action as a free or unconjugated protein. ISGylation involves a cascade of enzymatic reactions involving E1, E2, and E3 enzymes which catalyze the conjugation of ISG15 to a lysine residue in the target protein. Its target proteins include IFIT1, MX1/MxA, PPM1B, UBE2L6, UBA7, CHMP5, CHMP2A, CHMP4B and CHMP6. Isgylation of the viral sensor IFIH1/MDA5 promotes IFIH1/MDA5 oligomerization and triggers activation of innate immunity against a range of viruses, including coronaviruses, flaviviruses and picornaviruses. Can also isgylate: EIF2AK2/PKR which results in its activation, RIGI which inhibits its function in antiviral signaling response, EIF4E2 which enhances its cap structure-binding activity and translation-inhibition activity, UBE2N and UBE2E1 which negatively regulates their activity, IRF3 which inhibits its ubiquitination and degradation and FLNB which prevents its ability to interact with the upstream activators of the JNK cascade thereby inhibiting IFNA-induced JNK signaling. Exhibits antiviral activity towards both DNA and RNA viruses, including influenza A, HIV-1 and Ebola virus. Restricts HIV-1 and ebola virus via disruption of viral budding. Inhibits the ubiquitination of HIV-1 Gag and host TSG101 and disrupts their interaction, thereby preventing assembly and release of virions from infected cells. Inhibits Ebola virus budding mediated by the VP40 protein by disrupting ubiquitin ligase activity of NEDD4 and its ability to ubiquitinate VP40. ISGylates influenza A virus NS1 protein which causes a loss of function of the protein and the inhibition of virus replication. The secreted form of ISG15 can: induce natural killer cell proliferation, act as a chemotactic factor for neutrophils and act as a IFN-gamma-inducing cytokine playing an essential role in antimycobacterial immunity. The secreted form acts through the integrin ITGAL/ITGB2 receptor to initiate activation of SRC family tyrosine kinases including LYN, HCK and FGR which leads to secretion of IFNG and IL10; the interaction is mediated by ITGAL. The sequence is that of Ubiquitin-like protein ISG15 from Homo sapiens (Human).